A 1382-amino-acid chain; its full sequence is DNA-directed RNA polymerase subunit beta' (1382 aa).

Zn(2+) contacts are provided by Cys-70, Cys-72, Cys-85, and Cys-88. Mg(2+) contacts are provided by Asp-460, Asp-462, and Asp-464. Residues Cys-808, Cys-882, Cys-889, and Cys-892 each coordinate Zn(2+).

This sequence belongs to the RNA polymerase beta' chain family. In terms of assembly, the RNAP catalytic core consists of 2 alpha, 1 beta, 1 beta' and 1 omega subunit. When a sigma factor is associated with the core the holoenzyme is formed, which can initiate transcription. Requires Mg(2+) as cofactor. It depends on Zn(2+) as a cofactor.

It carries out the reaction RNA(n) + a ribonucleoside 5'-triphosphate = RNA(n+1) + diphosphate. Its function is as follows. DNA-dependent RNA polymerase catalyzes the transcription of DNA into RNA using the four ribonucleoside triphosphates as substrates. In Citrifermentans bemidjiense (strain ATCC BAA-1014 / DSM 16622 / JCM 12645 / Bem) (Geobacter bemidjiensis), this protein is DNA-directed RNA polymerase subunit beta'.